Consider the following 184-residue polypeptide: Thymidine kinase (184 aa).

ATP contacts are provided by residues 9 to 16 and 82 to 85; these read AAMNSGKS and DEAQ. The active-site Proton acceptor is the Glu83. 4 residues coordinate Zn(2+): Cys140, Cys142, Cys177, and Cys180.

This sequence belongs to the thymidine kinase family. Homotetramer.

Its subcellular location is the cytoplasm. The enzyme catalyses thymidine + ATP = dTMP + ADP + H(+). This is Thymidine kinase from Chromobacterium violaceum (strain ATCC 12472 / DSM 30191 / JCM 1249 / CCUG 213 / NBRC 12614 / NCIMB 9131 / NCTC 9757 / MK).